A 28-amino-acid chain; its full sequence is U15-ctenitoxin-Co1a (28 aa).

Cystine bridges form between Cys-3/Cys-17 and Cys-10/Cys-22.

In terms of tissue distribution, expressed by the venom gland.

Its subcellular location is the secreted. Functionally, insecticidal neurotoxin that reversibly inhibits the N-methyl-D-aspartate (NMDA)-subtype of ionotropic glutamate receptor (GRIN) and inhibits inactivation of insect sodium channels (Nav). In vivo, is highly toxic to insects. This Ctenus ornatus (Brazilian spider) protein is U15-ctenitoxin-Co1a.